The following is a 191-amino-acid chain: Salivary lipocalin (191 aa).

Residues 1–16 (MKLLLLLCLGLTLASS) form the signal peptide. Asparagine 69 carries an N-linked (GlcNAc...) asparagine glycan. Cysteines 84 and 176 form a disulfide.

The protein belongs to the calycin superfamily. Lipocalin family. In terms of assembly, homodimer. As to expression, in the submaxillary salivary glands of mature male pigs, but absent from that of females. Expression was much lower in submaxillary glands of castrated male pigs than in sexually mature individuals.

It localises to the secreted. In terms of biological role, binds pheromones, the pheromones are released from the saliva of males and affect the sexual behavior of females. The polypeptide is Salivary lipocalin (SAL1) (Sus scrofa (Pig)).